The chain runs to 1872 residues: Ral GTPase-activating protein subunit alpha-2 (1872 aa).

Phosphoserine occurs at positions 373, 376, and 379. Positions Asp-446–Ser-469 are enriched in basic and acidic residues. Residues Asp-446–Trp-481 form a disordered region. Phosphoserine is present on residues Ser-486 and Ser-696. Disordered stretches follow at residues Phe-711–Arg-730 and Gln-758–Asp-849. A Phosphothreonine; by PKB modification is found at Thr-715. The span at Ser-775–Lys-795 shows a compositional bias: polar residues. Residues Ser-796 to Gly-810 are compositionally biased toward basic and acidic residues. A phosphoserine mark is found at Ser-819 and Ser-820. Basic and acidic residues predominate over residues Leu-824 to Ser-843. Ser-1592 is subject to Phosphoserine. Residues Leu-1634–Ile-1842 enclose the Rap-GAP domain.

In terms of assembly, component of the heterodimeric RalGAP2 complex with RALGAPB. Heterodimerization is required for activity. In terms of tissue distribution, highly expressed in lung, liver, testis and thymus with lower levels in brain and heart (at protein level).

It localises to the cytoplasm. In terms of biological role, catalytic subunit of the heterodimeric RalGAP2 complex which acts as a GTPase activator for the Ras-like small GTPases RALA and RALB. The chain is Ral GTPase-activating protein subunit alpha-2 from Rattus norvegicus (Rat).